We begin with the raw amino-acid sequence, 180 residues long: UPF0149 protein XOO1028 (180 aa).

The protein belongs to the UPF0149 family.

In Xanthomonas oryzae pv. oryzae (strain MAFF 311018), this protein is UPF0149 protein XOO1028.